The following is a 344-amino-acid chain: uncharacterized protein (344 aa).

The first 20 residues, 1–20 (MEIRIMLFILMMMVMPVSYA), serve as a signal peptide directing secretion.

The protein belongs to the fimbrial protein family.

In terms of biological role, part of the yehABCD fimbrial operon. Could contribute to adhesion to various surfaces in specific environmental niches. This is an uncharacterized protein from Escherichia coli (strain K12).